The following is a 545-amino-acid chain: Myotubularin-related protein 9 (545 aa).

Met-1 is modified (N-acetylmethionine). The 96-residue stretch at 4–99 (AELIKTPRVD…LNIASSIEAL (96 aa)) folds into the GRAM domain. Residues 123–498 (GWHSFLPEQE…QSLQLWEGIF (376 aa)) enclose the Myotubularin phosphatase domain. The stretch at 508–542 (LDEAYEEMVNIIEYNKELQAKVNVLRRQLAELETE) forms a coiled coil.

This sequence belongs to the protein-tyrosine phosphatase family. Non-receptor class myotubularin subfamily. Homodimer. Heterodimer (via C-terminus) with lipid phosphatase MTMR6 (via C-terminus). Heterodimer (via coiled coil domain) with lipid phosphatase MTMR7 (via C-terminus).

Its subcellular location is the cytoplasm. It localises to the cell projection. The protein localises to the ruffle membrane. The protein resides in the perinuclear region. It is found in the endoplasmic reticulum. Functionally, acts as an adapter for myotubularin-related phosphatases. Increases lipid phosphatase MTMR6 catalytic activity, specifically towards phosphatidylinositol 3,5-bisphosphate, and MTMR6 binding affinity for phosphorylated phosphatidylinositols. Positively regulates lipid phosphatase MTMR7 catalytic activity. The formation of the MTMR6-MTMR9 complex, stabilizes both MTMR6 and MTMR9 protein levels. Plays a role in the late stages of macropinocytosis possibly by regulating MTMR6-mediated dephosphorylation of phosphatidylinositol 3-phosphate in membrane ruffles. Negatively regulates DNA damage-induced apoptosis, in part via its association with MTMR6. Does not bind mono-, di- and tri-phosphorylated phosphatidylinositols, phosphatidic acid and phosphatidylserine. This chain is Myotubularin-related protein 9 (Mtmr9), found in Mus musculus (Mouse).